Here is a 493-residue protein sequence, read N- to C-terminus: Cytochrome P450 710A4 (493 aa).

Residues 5 to 25 form a helical membrane-spanning segment; that stretch reads VSLFASLTPYLVSALLLFLLL. Heme is bound at residue Cys435.

The protein belongs to the cytochrome P450 family. The cofactor is heme. As to expression, very weak expression in roots and root hairs. Not detected in the root tips.

The protein localises to the membrane. It carries out the reaction 5-dehydroepisterol + NADPH + O2 + H(+) = ergosta-5,7,22,24(28)-tetraen-3beta-ol + NADP(+) + 2 H2O. The protein operates within steroid biosynthesis; sterol biosynthesis. Required to form the C-22 double bond in the sterol side chain. Possesses C-22 desaturase activity toward beta-sitosterol and produces stigmasterol. This Arabidopsis thaliana (Mouse-ear cress) protein is Cytochrome P450 710A4.